A 273-amino-acid polypeptide reads, in one-letter code: Large ribosomal subunit protein uL2cz/uL2cy (273 aa).

The tract at residues 224–273 (NPVDHPHGGGEGRAPIGRKKPATPWGYPALGRRSRKRNKYSDRFILRRRK) is disordered. Positions 262-273 (KYSDRFILRRRK) are enriched in basic and acidic residues.

It belongs to the universal ribosomal protein uL2 family. As to quaternary structure, part of the 50S ribosomal subunit.

The protein localises to the plastid. It localises to the chloroplast. This chain is Large ribosomal subunit protein uL2cz/uL2cy (rpl2-A), found in Piper cenocladum (Ant piper).